A 106-amino-acid polypeptide reads, in one-letter code: UPF0060 membrane protein Csal_2746 (106 aa).

The next 4 membrane-spanning stretches (helical) occupy residues 6 to 26 (LLFI…WLWL), 31 to 51 (SPWL…LLSL), 59 to 79 (VYAA…WGVD), and 85 to 105 (PTDW…ASGW).

The protein belongs to the UPF0060 family.

Its subcellular location is the cell inner membrane. This chain is UPF0060 membrane protein Csal_2746, found in Chromohalobacter salexigens (strain ATCC BAA-138 / DSM 3043 / CIP 106854 / NCIMB 13768 / 1H11).